A 208-amino-acid polypeptide reads, in one-letter code: MDKFTVLTAIAAPLPVANVDTDKIIPARFLKTIKRTGLGTHLFDAMRYIDGQENPDFVLNREPYRQAQILVTHENFGCGSSREHAPWALLDFGIRCVIAPDFADIFYNNSFKNGILPIRLPRDICDRLMDDAGNGANSRLTVDLERQVVVRPNGEEIPFEIDPFRRHLLLNGLDDIGQTLQRREAIDRFEENRTVTQPWFPRITLPAN.

Belongs to the LeuD family. LeuD type 1 subfamily. Heterodimer of LeuC and LeuD.

It catalyses the reaction (2R,3S)-3-isopropylmalate = (2S)-2-isopropylmalate. It participates in amino-acid biosynthesis; L-leucine biosynthesis; L-leucine from 3-methyl-2-oxobutanoate: step 2/4. Catalyzes the isomerization between 2-isopropylmalate and 3-isopropylmalate, via the formation of 2-isopropylmaleate. The sequence is that of 3-isopropylmalate dehydratase small subunit from Granulibacter bethesdensis (strain ATCC BAA-1260 / CGDNIH1).